The sequence spans 202 residues: Small ribosomal subunit protein uS4c (202 aa).

In terms of domain architecture, S4 RNA-binding spans 90 to 153 (MRLDNIIFRL…KSETIISKNI (64 aa)).

It belongs to the universal ribosomal protein uS4 family. As to quaternary structure, part of the 30S ribosomal subunit. Contacts protein S5. The interaction surface between S4 and S5 is involved in control of translational fidelity.

The protein localises to the plastid. Its subcellular location is the chloroplast. One of the primary rRNA binding proteins, it binds directly to 16S rRNA where it nucleates assembly of the body of the 30S subunit. In terms of biological role, with S5 and S12 plays an important role in translational accuracy. This Catharomnion ciliatum (Moss) protein is Small ribosomal subunit protein uS4c (rps4).